A 685-amino-acid chain; its full sequence is Putative lipase ROG1 (685 aa).

The active-site Charge relay system is Ser269.

The protein belongs to the putative lipase ROG1 family.

This is Putative lipase ROG1 (ROG1) from Saccharomyces cerevisiae (strain ATCC 204508 / S288c) (Baker's yeast).